We begin with the raw amino-acid sequence, 408 residues long: Phosphoglycerate kinase (408 aa).

Residues 24–26 (DLN), Arg39, 62–65 (HLGR), Arg121, and Arg161 each bind substrate. ATP is bound by residues Lys211, Gly307, Glu338, and 364–367 (GGDS).

This sequence belongs to the phosphoglycerate kinase family. In terms of assembly, monomer.

Its subcellular location is the cytoplasm. The enzyme catalyses (2R)-3-phosphoglycerate + ATP = (2R)-3-phospho-glyceroyl phosphate + ADP. It functions in the pathway carbohydrate degradation; glycolysis; pyruvate from D-glyceraldehyde 3-phosphate: step 2/5. This is Phosphoglycerate kinase from Arthrobacter sp. (strain FB24).